The sequence spans 67 residues: Neurotoxin Os3 (67 aa).

One can recognise an LCN-type CS-alpha/beta domain in the interval 3-67 (RDGYIAQPHN…GVIVDGEKCH (65 aa)). 4 cysteine pairs are disulfide-bonded: cysteine 13–cysteine 66, cysteine 17–cysteine 39, cysteine 24–cysteine 48, and cysteine 28–cysteine 50.

It belongs to the long (4 C-C) scorpion toxin superfamily. Sodium channel inhibitor family. Alpha subfamily. In terms of tissue distribution, expressed by the venom gland.

The protein localises to the secreted. Functionally, binds to sodium channels (Nav) and inhibits the inactivation of the activated channels, thereby blocking neuronal transmission. The sequence is that of Neurotoxin Os3 from Orthochirus scrobiculosus (Central Asian scorpion).